Here is a 114-residue protein sequence, read N- to C-terminus: Ribonuclease U2 (114 aa).

Intrachain disulfides connect cysteine 1/cysteine 54, cysteine 9/cysteine 113, and cysteine 55/cysteine 96. Residues aspartate 29, valine 30, alanine 31, asparagine 32, aspartate 37, and tyrosine 39 each contribute to the Ca(2+) site. 39 to 49 contributes to the substrate binding site; sequence YPHQYYDEASE. Residue histidine 41 is part of the active site. Glutamate 62 (proton acceptor) is an active-site residue. Residue arginine 85 participates in substrate binding. Histidine 101 functions as the Proton donor in the catalytic mechanism. Substrate is bound at residue 108 to 110; sequence DGF.

It belongs to the ribonuclease U2 family.

It carries out the reaction [RNA] containing adenosine + H2O = an [RNA fragment]-3'-adenosine-3'-phosphate + a 5'-hydroxy-ribonucleotide-3'-[RNA fragment].. It catalyses the reaction [RNA] containing guanosine + H2O = an [RNA fragment]-3'-guanosine-3'-phosphate + a 5'-hydroxy-ribonucleotide-3'-[RNA fragment].. The sequence is that of Ribonuclease U2 (RNU2) from Ustilago sphaerogena (Smut fungus).